The chain runs to 298 residues: ADP/ATP translocase 1 (298 aa).

The Mitochondrial intermembrane portion of the chain corresponds to 1 to 7; it reads MGDQALS. An N-acetylglycine modification is found at G2. Residues 6–98 form a Solcar 1 repeat; the sequence is LSFLKDFLAG…FAFKDKYKQI (93 aa). A Phosphoserine modification is found at S7. The chain crosses the membrane as a helical span at residues 8–37; sequence FLKDFLAGGIAAAVSKTAVAPIERVKLLLQ. Residues 38–74 are Mitochondrial matrix-facing; it reads VQHASKQISAEKQYKGIIDCVVRIPKEQGFLSFWRGN. K52 bears the N6,N6,N6-trimethyllysine mark. Residues 75–99 form a helical membrane-spanning segment; sequence LANVIRYFPTQALNFAFKDKYKQIF. R80 and K92 together coordinate ADP. Topologically, residues 100–109 are mitochondrial intermembrane; it reads LGGVDRHKQF. Residues 110-130 form a helical membrane-spanning segment; sequence WRYFAGNLASGGAAGATSLCF. 2 Solcar repeats span residues 111–201 and 212–297; these read RYFA…AKGM and VSWM…IKKY. Residues 131-178 are Mitochondrial matrix-facing; the sequence is VYPLDFARTRLAADVGKGSSQREFNGLGDCLTKIFKSDGLKGLYQGFS. The residue at position 147 (K147) is an N6-succinyllysine. Phosphoserine is present on residues S149 and S150. Position 160 is an S-nitrosocysteine (C160). A helical transmembrane segment spans residues 179–199; the sequence is VSVQGIIIYRAAYFGVYDTAK. Residues 200–210 lie on the Mitochondrial intermembrane side of the membrane; sequence GMLPDPKNVHI. Residues 211–231 form a helical membrane-spanning segment; that stretch reads IVSWMIAQSVTAVAGLVSYPF. At 232 to 273 the chain is on the mitochondrial matrix side; the sequence is DTVRRRMMMQSGRKGADIMYTGTVDCWRKIAKDEGRKAFFKG. R235 is an ADP binding site. The interval 235-240 is important for transport activity; sequence RRRMMM. A Nucleotide carrier signature motif motif is present at residues 235–240; it reads RRRMMM. N6-succinyllysine occurs at positions 245 and 272. A helical transmembrane segment spans residues 274–291; it reads AWSNVLRGMGGAFVLVLY. The Mitochondrial intermembrane segment spans residues 292 to 298; sequence DEIKKYV.

This sequence belongs to the mitochondrial carrier (TC 2.A.29) family. As to quaternary structure, monomer. Found in a complex with ARL2, ARL2BP and SLC25A4/ANT1. Interacts with ARL2BP. Interacts with TIMM44; leading to inhibit the presequence translocase TIMM23, thereby promoting stabilization of PINK1. Post-translationally, under cell death induction, transglutaminated by TGM2. Transglutamination leads to formation of covalent cross-links between a glutamine and the epsilon-amino group of a lysine residue, forming polymers.

The protein localises to the mitochondrion inner membrane. Its subcellular location is the membrane. It catalyses the reaction ADP(in) + ATP(out) = ADP(out) + ATP(in). The enzyme catalyses H(+)(in) = H(+)(out). With respect to regulation, the matrix-open state (m-state) is inhibited by the membrane-permeable bongkrekic acid (BKA). The cytoplasmic-open state (c-state) is inhibited by the membrane-impermeable toxic inhibitor carboxyatractyloside (CATR). Proton transporter activity is inhibited by ADP:ATP antiporter activity. In terms of biological role, ADP:ATP antiporter that mediates import of ADP into the mitochondrial matrix for ATP synthesis, and export of ATP out to fuel the cell. Cycles between the cytoplasmic-open state (c-state) and the matrix-open state (m-state): operates by the alternating access mechanism with a single substrate-binding site intermittently exposed to either the cytosolic (c-state) or matrix (m-state) side of the inner mitochondrial membrane. In addition to its ADP:ATP antiporter activity, also involved in mitochondrial uncoupling and mitochondrial permeability transition pore (mPTP) activity. Plays a role in mitochondrial uncoupling by acting as a proton transporter: proton transport uncouples the proton flows via the electron transport chain and ATP synthase to reduce the efficiency of ATP production and cause mitochondrial thermogenesis. Proton transporter activity is inhibited by ADP:ATP antiporter activity, suggesting that SLC25A4/ANT1 acts as a master regulator of mitochondrial energy output by maintaining a delicate balance between ATP production (ADP:ATP antiporter activity) and thermogenesis (proton transporter activity). Proton transporter activity requires free fatty acids as cofactor, but does not transport it. Also plays a key role in mPTP opening, a non-specific pore that enables free passage of the mitochondrial membranes to solutes of up to 1.5 kDa, and which contributes to cell death. It is however unclear if SLC25A4/ANT1 constitutes a pore-forming component of mPTP or regulates it. Acts as a regulator of mitophagy independently of ADP:ATP antiporter activity: promotes mitophagy via interaction with TIMM44, leading to inhibit the presequence translocase TIMM23, thereby promoting stabilization of PINK1. This is ADP/ATP translocase 1 from Rattus norvegicus (Rat).